Reading from the N-terminus, the 232-residue chain is Glycerol-3-phosphate acyltransferase (232 aa).

Helical transmembrane passes span Phe4–Gly24, Val56–Phe76, Ile90–Ala110, Met124–Val144, Val152–Phe172, and Ser191–His211.

Belongs to the PlsY family. As to quaternary structure, probably interacts with PlsX.

It localises to the cell inner membrane. It carries out the reaction an acyl phosphate + sn-glycerol 3-phosphate = a 1-acyl-sn-glycero-3-phosphate + phosphate. It participates in lipid metabolism; phospholipid metabolism. Functionally, catalyzes the transfer of an acyl group from acyl-phosphate (acyl-PO(4)) to glycerol-3-phosphate (G3P) to form lysophosphatidic acid (LPA). This enzyme utilizes acyl-phosphate as fatty acyl donor, but not acyl-CoA or acyl-ACP. In Chlorobaculum tepidum (strain ATCC 49652 / DSM 12025 / NBRC 103806 / TLS) (Chlorobium tepidum), this protein is Glycerol-3-phosphate acyltransferase.